The following is a 99-amino-acid chain: Aspartyl/glutamyl-tRNA(Asn/Gln) amidotransferase subunit C (99 aa).

Belongs to the GatC family. In terms of assembly, heterotrimer of A, B and C subunits.

It carries out the reaction L-glutamyl-tRNA(Gln) + L-glutamine + ATP + H2O = L-glutaminyl-tRNA(Gln) + L-glutamate + ADP + phosphate + H(+). The enzyme catalyses L-aspartyl-tRNA(Asn) + L-glutamine + ATP + H2O = L-asparaginyl-tRNA(Asn) + L-glutamate + ADP + phosphate + 2 H(+). Its function is as follows. Allows the formation of correctly charged Asn-tRNA(Asn) or Gln-tRNA(Gln) through the transamidation of misacylated Asp-tRNA(Asn) or Glu-tRNA(Gln) in organisms which lack either or both of asparaginyl-tRNA or glutaminyl-tRNA synthetases. The reaction takes place in the presence of glutamine and ATP through an activated phospho-Asp-tRNA(Asn) or phospho-Glu-tRNA(Gln). The sequence is that of Aspartyl/glutamyl-tRNA(Asn/Gln) amidotransferase subunit C from Mycolicibacterium vanbaalenii (strain DSM 7251 / JCM 13017 / BCRC 16820 / KCTC 9966 / NRRL B-24157 / PYR-1) (Mycobacterium vanbaalenii).